The primary structure comprises 491 residues: UDP-N-acetylmuramate--L-alanine ligase (491 aa).

126 to 132 lines the ATP pocket; sequence GTHGKTT.

It belongs to the MurCDEF family.

Its subcellular location is the cytoplasm. The catalysed reaction is UDP-N-acetyl-alpha-D-muramate + L-alanine + ATP = UDP-N-acetyl-alpha-D-muramoyl-L-alanine + ADP + phosphate + H(+). The protein operates within cell wall biogenesis; peptidoglycan biosynthesis. Functionally, cell wall formation. The polypeptide is UDP-N-acetylmuramate--L-alanine ligase (Salmonella arizonae (strain ATCC BAA-731 / CDC346-86 / RSK2980)).